The sequence spans 31 residues: Cyclotide glopa C (31 aa).

A cross-link (cyclopeptide (Gly-Asn)) is located at residues 1-31; that stretch reads GDLPICGETCFEGGNCRIPGCTCVWPFCSKN. Cystine bridges form between cysteine 6–cysteine 21, cysteine 10–cysteine 23, and cysteine 16–cysteine 28.

This is a cyclic peptide.

Functionally, probably participates in a plant defense mechanism. This is Cyclotide glopa C from Gloeospermum pauciflorum.